Reading from the N-terminus, the 503-residue chain is ATP-dependent RNA helicase dbp3 (503 aa).

Basic and acidic residues predominate over residues 1–25 (MAKRVQHEGGDYRPQKRSKNERNGE). A disordered region spans residues 1-35 (MAKRVQHEGGDYRPQKRSKNERNGEGSKVSPSAEA). The Q motif motif lies at 104-112 (SFSSPTPIQ). The 177-residue stretch at 116 to 292 (WPLLFAGRDV…ATFMTSAVTV (177 aa)) folds into the Helicase ATP-binding domain. 129 to 136 (AETGSGKT) serves as a coordination point for ATP. The DEAD box motif lies at 239–242 (DEAD). One can recognise a Helicase C-terminal domain in the interval 307–472 (RIKQVVEVVK…DVPDALLKFG (166 aa)).

It belongs to the DEAD box helicase family. DDX5/DBP2 subfamily.

Its subcellular location is the nucleus. It is found in the nucleolus. It carries out the reaction ATP + H2O = ADP + phosphate + H(+). Its function is as follows. ATP-dependent RNA helicase required for 60S ribosomal subunit synthesis. Involved in efficient pre-rRNA processing, predominantly at site A3, which is necessary for the normal formation of 25S and 5.8S rRNAs. This Neosartorya fischeri (strain ATCC 1020 / DSM 3700 / CBS 544.65 / FGSC A1164 / JCM 1740 / NRRL 181 / WB 181) (Aspergillus fischerianus) protein is ATP-dependent RNA helicase dbp3 (dbp3).